The following is a 367-amino-acid chain: Glutamate 5-kinase (367 aa).

Residue Lys-10 coordinates ATP. 3 residues coordinate substrate: Ser-50, Asp-137, and Asn-149. Residues 169-170 and 211-217 each bind ATP; these read TD and TGGMSTK. Positions 275-353 constitute a PUA domain; it reads AGEITVDEGA…QQIDAILGYE (79 aa).

This sequence belongs to the glutamate 5-kinase family.

It localises to the cytoplasm. The catalysed reaction is L-glutamate + ATP = L-glutamyl 5-phosphate + ADP. Its pathway is amino-acid biosynthesis; L-proline biosynthesis; L-glutamate 5-semialdehyde from L-glutamate: step 1/2. Functionally, catalyzes the transfer of a phosphate group to glutamate to form L-glutamate 5-phosphate. This chain is Glutamate 5-kinase, found in Salmonella paratyphi A (strain ATCC 9150 / SARB42).